A 202-amino-acid polypeptide reads, in one-letter code: Small ribosomal subunit protein uS2 (202 aa).

This sequence belongs to the universal ribosomal protein uS2 family.

This chain is Small ribosomal subunit protein uS2 (rps2), found in Pyrococcus abyssi (strain GE5 / Orsay).